The following is a 152-amino-acid chain: Large ribosomal subunit protein uL24 (152 aa).

The tract at residues 128-152 (VVEEKETSKTSEGGGKTIEETEGEK) is disordered.

The protein belongs to the universal ribosomal protein uL24 family. In terms of assembly, part of the 50S ribosomal subunit.

Its function is as follows. One of two assembly initiator proteins, it binds directly to the 5'-end of the 23S rRNA, where it nucleates assembly of the 50S subunit. Functionally, located at the polypeptide exit tunnel on the outside of the subunit. This Staphylothermus marinus (strain ATCC 43588 / DSM 3639 / JCM 9404 / F1) protein is Large ribosomal subunit protein uL24.